A 98-amino-acid polypeptide reads, in one-letter code: Integration host factor subunit alpha (98 aa).

The disordered stretch occupies residues 50-71 (GNFDLRDKNQRPGRNPKTGEDI).

The protein belongs to the bacterial histone-like protein family. In terms of assembly, heterodimer of an alpha and a beta chain.

In terms of biological role, this protein is one of the two subunits of integration host factor, a specific DNA-binding protein that functions in genetic recombination as well as in transcriptional and translational control. This Proteus mirabilis (strain HI4320) protein is Integration host factor subunit alpha.